Here is a 987-residue protein sequence, read N- to C-terminus: SVPGPMGPSGPRGLPGPPGPGPQGFQGPPGEPGEPGSSGPMGPRGPPGPPGKNGDDGEAGKPGRPGERGPPGPQGARGLPGTAGLPGMKGHRGFSGLDGAKGDAGPAGPKGEPGSPGENGAPGQMGPRGLPGERGRPGASGPAGARGNDGAAGAAGPPGPTGPAGPPGFPGAVGAKGEAGPQGARGSEGPQGVRGEPGPPGPAGAAGPAGNPGADGQPGAKGANGAPGIAGAPGFPGARGPSGPQGPSGAPGPKGNSGEPGAPGNKGDTGAKGEPGPTGIQGPPGPAGEEGKRGARGEPGPTGLPGPPGERGGPGSRGFPGADGVAGPKGPAGERGSPGPAGPKGSPGEAGRPGEAGLPGAKGLTGSPGSPGPDGKTGPPGPAGQDGRPGPPGPPGARGQAGVMGFPGPKGAAGEPGKAGERGVPGPPGAVGPAGKDGEAGAQGPPGPAGPAGERGEQGPAPGFQGLPGPAGPPGEAGKPGEQGVPGDLGAPGPSGARGERGFPGERGVQGPPGPAGPRGSSQGAPGLQGMPGERGAAGLPGPKGDRGDAGPKGADGAPGKDGVRGLTGPIGPPGPAGAPGDKGESGPSGPAGPTGARGAPGDRGEPGPPGPAGFAGPPGADGQPGAKGEPGDAGAKGDAGPPGPAGPTGPPGPIGNVGAPGPKGARGSAGPPGATGFPGAAGRVGPPGPSGNAGPPGPPGPVGKEGGKGPRGETGPAGRPGEVGPPGPPGPGEKGSPGADGPAGAPGTPGPQGISGQRGVVGLPGQRGERGFPGLPGPSGEPGKQGPSGSSGERGPPGPMGPPGLAGPPGESGREGSPGAEGSPGRDGSPGPKGDRGESGPAGPPGAPGAPGAPGPVGPAGKSGDRGETGPAGPAGPAGPAGARGPAGPQGPRGDKGETGEQGDRGFSGLQGPAGPPGSPGEQGPSGASGPAGPRGPPGSAGSPGKDGLNGLPGPIGPPGPRGRTGDAGPVGPPGPPGPPGPPGPP.

Residues 1–21 show a composition bias toward pro residues; it reads SVPGPMGPSGPRGLPGPPGPG. Positions 1-987 are disordered; it reads SVPGPMGPSG…PGPPGPPGPP (987 aa). 4-hydroxyproline is present on residues proline 15, proline 18, proline 20, proline 29, proline 32, proline 35, proline 50, proline 65, proline 71, proline 80, and proline 86. The span at 23 to 41 shows a compositional bias: low complexity; it reads QGFQGPPGEPGEPGSSGPM. Residues 53 to 67 are compositionally biased toward basic and acidic residues; sequence NGDDGEAGKPGRPGE. The residue at position 89 (lysine 89) is a 5-hydroxylysine; alternate. Lysine 89 is a glycosylation site (O-linked (Gal...) hydroxylysine; alternate). Serine 95 is modified (phosphoserine). Over residues 103 to 119 the composition is skewed to low complexity; the sequence is DAGPAGPKGEPGSPGEN. Residues proline 113, proline 116, proline 122, proline 131, proline 137, proline 158, proline 167, proline 170, proline 197, proline 200, proline 212, proline 218, proline 227, proline 233, proline 236, and proline 251 each carry the 4-hydroxyproline modification. Positions 137-155 are enriched in low complexity; that stretch reads PGASGPAGARGNDGAAGAA. The span at 157-169 shows a compositional bias: pro residues; the sequence is PPGPTGPAGPPGF. Positions 203–253 are enriched in low complexity; it reads AGAAGPAGNPGADGQPGAKGANGAPGIAGAPGFPGARGPSGPQGPSGAPGP. Lysine 254 carries the 5-hydroxylysine modification. Proline 260, proline 263, proline 275, proline 284, proline 299, proline 305, proline 314, and proline 320 each carry 4-hydroxyproline. The span at 309 to 318 shows a compositional bias: gly residues; that stretch reads GERGGPGSRG. The residue at position 329 (lysine 329) is a 5-hydroxylysine. 4-hydroxyproline occurs at positions 338, 347, 353, 359, 368, 371, 380, 389, 395, 407, 416, 425, 428, 446, 468, 474, 480, 486, 492, 504, 513, 526, 532, and 541. A compositionally biased stretch (low complexity) spans 362–388; that stretch reads KGLTGSPGSPGPDGKTGPPGPAGQDGR. Positions 397-416 are enriched in low complexity; it reads ARGQAGVMGFPGPKGAAGEP. A compositionally biased stretch (low complexity) spans 458-483; the sequence is QGPAPGFQGLPGPAGPPGEAGKPGEQ. Lysine 553 is modified (5-hydroxylysine). A 4-hydroxyproline mark is found at proline 559, proline 574, and proline 580. A compositionally biased stretch (low complexity) spans 586–600; it reads SGPSGPAGPTGARGA. Phosphoserine is present on serine 589. Proline 601, proline 607, proline 610, proline 619, proline 625, proline 643, proline 652, and proline 661 each carry 4-hydroxyproline. Residues 613-640 are compositionally biased toward low complexity; that stretch reads AGFAGPPGADGQPGAKGEPGDAGAKGDA. The span at 642-654 shows a compositional bias: pro residues; it reads PPGPAGPTGPPGP. Lysine 664 bears the 5-hydroxylysine mark. Low complexity predominate over residues 669–685; that stretch reads SAGPPGATGFPGAAGRV. 2 positions are modified to 4-hydroxyproline: proline 673 and proline 679. At proline 687 the chain carries 3-hydroxyproline. 4-hydroxyproline occurs at positions 688, 697, 700, 721, 730, 738, 747, 765, 774, 777, 783, 798, 804, 810, 819, and 825. Positions 714–723 are enriched in low complexity; sequence ETGPAGRPGE. Residues 735–747 are compositionally biased toward low complexity; the sequence is KGSPGADGPAGAP. The segment covering 797–807 has biased composition (pro residues); sequence PPGPMGPPGLA. A compositionally biased stretch (low complexity) spans 809 to 824; sequence PPGESGREGSPGAEGS. Lysine 834 is subject to 5-hydroxylysine. Residues 843–858 show a composition bias toward pro residues; that stretch reads AGPPGAPGAPGAPGPV. Residues proline 846, proline 849, and proline 852 each carry the 4-hydroxyproline modification. Low complexity predominate over residues 879–893; the sequence is AGPAGARGPAGPQGP. The segment covering 894-905 has biased composition (basic and acidic residues); it reads RGDKGETGEQGD. Lysine 897 bears the 5-hydroxylysine mark. Residues proline 918, proline 921, proline 939, and proline 954 each carry the 4-hydroxyproline modification. Positions 921-954 are enriched in low complexity; the sequence is PGEQGPSGASGPAGPRGPPGSAGSPGKDGLNGLP. At proline 959 the chain carries 3-hydroxyproline. Proline 960 carries the post-translational modification 4-hydroxyproline. A compositionally biased stretch (pro residues) spans 972–987; the sequence is VGPPGPPGPPGPPGPP. Proline 974 carries the 3-hydroxyproline modification. Proline 975 is subject to 4-hydroxyproline. A 3-hydroxyproline modification is found at proline 977. Proline 978 is modified (4-hydroxyproline). Proline 980 is subject to 3-hydroxyproline. 4-hydroxyproline is present on residues proline 981, proline 984, and proline 987.

This sequence belongs to the fibrillar collagen family. In terms of assembly, trimers of one alpha 2(I) and two alpha 1(I) chains. In terms of processing, contains mostly 4-hydroxyproline. Proline residues at the third position of the tripeptide repeating unit (G-X-Y) are hydroxylated in some or all of the chains. Post-translationally, contains 3-hydroxyproline at a few sites. This modification occurs on the first proline residue in the sequence motif Gly-Pro-Hyp, where Hyp is 4-hydroxyproline. Lysine residues at the third position of the tripeptide repeating unit (G-X-Y) are 5-hydroxylated in some or all of the chains. In terms of processing, O-glycosylated on hydroxylated lysine residues. The O-linked glycan consists of a Glc-Gal disaccharide. In terms of tissue distribution, expressed in bones.

It localises to the secreted. Its subcellular location is the extracellular space. The protein localises to the extracellular matrix. Functionally, type I collagen is a member of group I collagen (fibrillar forming collagen). The protein is Collagen alpha-1(I) chain of Glossotherium robustum (Ground sloth).